Here is a 133-residue protein sequence, read N- to C-terminus: Small ribosomal subunit protein uS8 (133 aa).

It belongs to the universal ribosomal protein uS8 family. As to quaternary structure, part of the 30S ribosomal subunit. Contacts proteins S5 and S12.

One of the primary rRNA binding proteins, it binds directly to 16S rRNA central domain where it helps coordinate assembly of the platform of the 30S subunit. This Prochlorococcus marinus (strain MIT 9313) protein is Small ribosomal subunit protein uS8.